The sequence spans 110 residues: uncharacterized protein (110 aa).

2 helical membrane passes run 6-26 (VSLY…IYNV) and 38-58 (TSGP…IIGP).

It is found in the membrane. This is an uncharacterized protein from Saccharomyces cerevisiae (strain ATCC 204508 / S288c) (Baker's yeast).